Here is a 445-residue protein sequence, read N- to C-terminus: Tubby-like F-box protein 10 (445 aa).

In terms of domain architecture, F-box spans Ser-57–Gly-112. The span at Pro-382–Ala-398 shows a compositional bias: low complexity. Positions Pro-382–Glu-401 are disordered.

Belongs to the TUB family. As to quaternary structure, part of a SCF (ASK-cullin-F-box) protein ligase complex. Interacts with SKP1A/ASK1. Ubiquitous.

It is found in the nucleus. The protein operates within protein modification; protein ubiquitination. Component of SCF(ASK-cullin-F-box) E3 ubiquitin ligase complexes, which may mediate the ubiquitination and subsequent proteasomal degradation of target proteins. This Arabidopsis thaliana (Mouse-ear cress) protein is Tubby-like F-box protein 10.